The following is a 907-amino-acid chain: DNA ligase 4 (907 aa).

9 residues coordinate ATP: Glu273, Lys275, Arg280, Glu333, Phe378, Glu438, Lys443, Lys460, and Lys462. Lys275 acts as the N6-AMP-lysine intermediate in catalysis. Residue Glu333 coordinates Mg(2+). Residue Glu438 coordinates Mg(2+). BRCT domains are found at residues 655–754 (PVSN…ESDI) and 800–906 (VPLF…HYQC).

Belongs to the ATP-dependent DNA ligase family. The cofactor is Mg(2+).

The protein resides in the nucleus. It carries out the reaction ATP + (deoxyribonucleotide)n-3'-hydroxyl + 5'-phospho-(deoxyribonucleotide)m = (deoxyribonucleotide)n+m + AMP + diphosphate.. DNA ligase involved in DNA non-homologous end joining (NHEJ); required for double-strand break (DSB) repair. This is DNA ligase 4 (LIG4) from Kluyveromyces lactis (strain ATCC 8585 / CBS 2359 / DSM 70799 / NBRC 1267 / NRRL Y-1140 / WM37) (Yeast).